Here is a 119-residue protein sequence, read N- to C-terminus: Large ribosomal subunit protein uL18 (119 aa).

Belongs to the universal ribosomal protein uL18 family. In terms of assembly, part of the 50S ribosomal subunit; part of the 5S rRNA/L5/L18/L25 subcomplex. Contacts the 5S and 23S rRNAs.

Its function is as follows. This is one of the proteins that bind and probably mediate the attachment of the 5S RNA into the large ribosomal subunit, where it forms part of the central protuberance. The polypeptide is Large ribosomal subunit protein uL18 (Tropheryma whipplei (strain TW08/27) (Whipple's bacillus)).